Consider the following 356-residue polypeptide: Alpha-N-acetylneuraminide alpha-2,8-sialyltransferase (356 aa).

The Cytoplasmic portion of the chain corresponds to 1–29 (MSPCGRARRQTSRGAMAVLAWKFPRTRLP). The helical; Signal-anchor for type II membrane protein transmembrane segment at 30–48 (MGASALCVVVLCWLYIFPV) threads the bilayer. Over 49 to 356 (YRLPNEKEIV…CEDTSLQPTS (308 aa)) the chain is Lumenal. Asn71 and Asn119 each carry an N-linked (GlcNAc...) asparagine glycan. 2 cysteine pairs are disulfide-bonded: Cys138/Cys287 and Cys152/Cys347. CMP-N-acetyl-beta-neuraminate is bound by residues Asn143 and Asn166. Asn214 and Asn245 each carry an N-linked (GlcNAc...) asparagine glycan. Ser274, Thr275, Gly276, Trp296, and His310 together coordinate CMP-N-acetyl-beta-neuraminate. The Proton donor/acceptor role is filled by His322.

The protein belongs to the glycosyltransferase 29 family. In terms of tissue distribution, strongly expressed in melanoma cell lines, adult and fetal brain and to a lesser extent in adult and fetal lung.

The protein localises to the golgi apparatus membrane. The enzyme catalyses an N-acetyl-alpha-neuraminyl-(2-&gt;3)-beta-D-galactosyl derivative + CMP-N-acetyl-beta-neuraminate = an N-acetyl-alpha-neuraminyl-(2-&gt;8)-N-acetyl-alpha-neuraminyl-(2-&gt;3)-beta-D-galactosyl derivative + CMP + H(+). It catalyses the reaction a ganglioside GM3 (d18:1(4E)) + CMP-N-acetyl-beta-neuraminate = a ganglioside GD3 (d18:1(4E)) + CMP + H(+). The catalysed reaction is a ganglioside GD3 (d18:1(4E)) + CMP-N-acetyl-beta-neuraminate = a ganglioside GT3 (d18:1(4E)) + CMP + H(+). It carries out the reaction a ganglioside GD1a (d18:1(4E)) + CMP-N-acetyl-beta-neuraminate = a ganglioside GT1a (d18:1(4E)) + CMP + H(+). The enzyme catalyses a ganglioside GT1b (d18:1(4E)) + CMP-N-acetyl-beta-neuraminate = a ganglioside GQ1b (d18:1(4E)) + CMP + H(+). It catalyses the reaction a ganglioside GM1b (d18:1(4E)) + CMP-N-acetyl-beta-neuraminate = a ganglioside GD1c (d18:1(4E)) + CMP + H(+). The catalysed reaction is a ganglioside GD3 + CMP-N-acetyl-beta-neuraminate = a ganglioside GT3 + CMP + H(+). It carries out the reaction [alpha-N-acetylneuraminyl-(2-&gt;8)](n)-alpha-N-acetylneuraminyl-(2-&gt;8)-alpha-N-acetylneuraminyl-(2-&gt;3)-beta-D-galactosyl-(1-&gt;4)-beta-D-glucosyl-(1&lt;-&gt;1)-ceramide + CMP-N-acetyl-beta-neuraminate = [alpha-N-acetylneuraminyl-(2-&gt;8)](n+1)-alpha-N-acetylneuraminyl-(2-&gt;8)-alpha-N-acetylneuraminyl-(2-&gt;3)-beta-D-galactosyl-(1-&gt;4)-beta-D-glucosyl-(1&lt;-&gt;1)-ceramide + CMP + H(+). It participates in protein modification; protein glycosylation. It functions in the pathway lipid metabolism; sphingolipid metabolism. Functionally, catalyzes the addition of sialic acid in alpha 2,8-linkage to the sialic acid moiety of the ganglioside GM3 to form ganglioside GD3; gangliosides are a subfamily of complex glycosphingolipds that contain one or more residues of sialic acid. Can catalyze the addition of a second alpha-2,8-sialic acid to GD3 to form GT3. Can use GM1b, GD1a and GT1b as acceptor substrates to synthesize GD1c, GT1a and GQ1b respectively. Can synthesize unusual tetra- and pentasialylated lactosylceramide derivatives identified as GQ3 (II3Neu5Ac4-Gg2Cer) and GP3 (II3Neu5Ac5-Gg2Cer) in breast cancer cells. The chain is Alpha-N-acetylneuraminide alpha-2,8-sialyltransferase from Homo sapiens (Human).